The chain runs to 473 residues: 3-isopropylmalate dehydratase large subunit (473 aa).

[4Fe-4S] cluster contacts are provided by cysteine 354, cysteine 414, and cysteine 417.

Belongs to the aconitase/IPM isomerase family. LeuC type 1 subfamily. Heterodimer of LeuC and LeuD. Requires [4Fe-4S] cluster as cofactor.

The catalysed reaction is (2R,3S)-3-isopropylmalate = (2S)-2-isopropylmalate. It participates in amino-acid biosynthesis; L-leucine biosynthesis; L-leucine from 3-methyl-2-oxobutanoate: step 2/4. Functionally, catalyzes the isomerization between 2-isopropylmalate and 3-isopropylmalate, via the formation of 2-isopropylmaleate. The polypeptide is 3-isopropylmalate dehydratase large subunit (Mycobacterium tuberculosis (strain CDC 1551 / Oshkosh)).